The primary structure comprises 168 residues: ATP synthase subunit b (168 aa).

Residues 9–29 form a helical membrane-spanning segment; sequence AIPFGTIAYTLFIFLLLLVML.

The protein belongs to the ATPase B chain family. In terms of assembly, F-type ATPases have 2 components, F(1) - the catalytic core - and F(0) - the membrane proton channel. F(1) has five subunits: alpha(3), beta(3), gamma(1), delta(1), epsilon(1). F(0) has three main subunits: a(1), b(2) and c(10-14). The alpha and beta chains form an alternating ring which encloses part of the gamma chain. F(1) is attached to F(0) by a central stalk formed by the gamma and epsilon chains, while a peripheral stalk is formed by the delta and b chains.

It localises to the cell membrane. Its function is as follows. F(1)F(0) ATP synthase produces ATP from ADP in the presence of a proton or sodium gradient. F-type ATPases consist of two structural domains, F(1) containing the extramembraneous catalytic core and F(0) containing the membrane proton channel, linked together by a central stalk and a peripheral stalk. During catalysis, ATP synthesis in the catalytic domain of F(1) is coupled via a rotary mechanism of the central stalk subunits to proton translocation. Functionally, component of the F(0) channel, it forms part of the peripheral stalk, linking F(1) to F(0). This chain is ATP synthase subunit b, found in Bacillus cereus (strain ATCC 10987 / NRS 248).